A 104-amino-acid polypeptide reads, in one-letter code: Urease subunit beta (104 aa).

Belongs to the urease beta subunit family. Heterotrimer of UreA (gamma), UreB (beta) and UreC (alpha) subunits. Three heterotrimers associate to form the active enzyme.

The protein resides in the cytoplasm. The enzyme catalyses urea + 2 H2O + H(+) = hydrogencarbonate + 2 NH4(+). It participates in nitrogen metabolism; urea degradation; CO(2) and NH(3) from urea (urease route): step 1/1. In Rhodococcus jostii (strain RHA1), this protein is Urease subunit beta.